The following is a 93-amino-acid chain: N-myc protein (93 aa).

As to quaternary structure, efficient DNA binding requires dimerization with another bHLH protein. Binds DNA as a heterodimer with MAX. As to expression, barely detectable in most tissues assayed.

The protein localises to the nucleus. Its function is as follows. May function as a transcription factor. This chain is N-myc protein (mycn), found in Danio rerio (Zebrafish).